Here is a 461-residue protein sequence, read N- to C-terminus: Cysteine--tRNA ligase (461 aa).

Position 28 (Cys28) interacts with Zn(2+). The short motif at Ile30–His40 is the 'HIGH' region element. Positions 209, 234, and 238 each coordinate Zn(2+). Residues Lys266–Ser270 carry the 'KMSKS' region motif. Lys269 provides a ligand contact to ATP.

The protein belongs to the class-I aminoacyl-tRNA synthetase family. Monomer. The cofactor is Zn(2+).

It is found in the cytoplasm. The enzyme catalyses tRNA(Cys) + L-cysteine + ATP = L-cysteinyl-tRNA(Cys) + AMP + diphosphate. The sequence is that of Cysteine--tRNA ligase from Yersinia pestis bv. Antiqua (strain Antiqua).